A 327-amino-acid polypeptide reads, in one-letter code: Fe-S cluster assembly protein DRE2 (327 aa).

Residues 1–14 (MSPATVTIDTTPDF) show a composition bias toward polar residues. Disordered regions lie at residues 1-20 (MSPATVTIDTTPDFSNGGAP) and 153-179 (NKGEGGGPVQSPAAATQPTAPAPAAAA). Residues 17–144 (GGAPHSTLLL…EKPAEEVAAV (128 aa)) are N-terminal SAM-like domain. The segment at 145-214 (PLKFLKKKNK…EDELMTEEDL (70 aa)) is linker. The span at 164-179 (PAAATQPTAPAPAAAA) shows a compositional bias: low complexity. 4 residues coordinate [2Fe-2S] cluster: Cys-224, Cys-235, Cys-238, and Cys-240. The tract at residues 224–240 (CAPKPGKKRRACKDCTC) is fe-S binding site A. The [4Fe-4S] cluster site is built by Cys-290, Cys-293, Cys-301, and Cys-304. 2 consecutive short sequence motifs (cx2C motif) follow at residues 290-293 (CGSC) and 301-304 (CADC). The interval 290-304 (CGSCALGDAFRCADC) is fe-S binding site B.

This sequence belongs to the anamorsin family. Monomer. Interacts with TAH18. Interacts with MIA40. The cofactor is [2Fe-2S] cluster. [4Fe-4S] cluster is required as a cofactor.

The protein localises to the cytoplasm. It is found in the mitochondrion intermembrane space. Component of the cytosolic iron-sulfur (Fe-S) protein assembly (CIA) machinery required for the maturation of extramitochondrial Fe-S proteins. Part of an electron transfer chain functioning in an early step of cytosolic Fe-S biogenesis, facilitating the de novo assembly of a [4Fe-4S] cluster on the scaffold complex CFD1-NBP35. Electrons are transferred to DRE2 from NADPH via the FAD- and FMN-containing protein TAH18. TAH18-DRE2 are also required for the assembly of the diferric tyrosyl radical cofactor of ribonucleotide reductase (RNR), probably by providing electrons for reduction during radical cofactor maturation in the catalytic small subunit RNR2. The sequence is that of Fe-S cluster assembly protein DRE2 from Pyricularia oryzae (strain 70-15 / ATCC MYA-4617 / FGSC 8958) (Rice blast fungus).